A 148-amino-acid chain; its full sequence is Large ribosomal subunit protein bL9 (148 aa).

The protein belongs to the bacterial ribosomal protein bL9 family.

Functionally, binds to the 23S rRNA. The chain is Large ribosomal subunit protein bL9 from Bacillus cereus (strain B4264).